A 1904-amino-acid polypeptide reads, in one-letter code: Fatty acid synthase beta subunit hexB (1904 aa).

Residues 24-395 (LSVAFGGQGP…TEGTGVRVIQ (372 aa)) form an acetyltransferase (AT) domain region. The enoyl reductase (ER) domain stretch occupies residues 447 to 691 (TQLLNAPPVM…LIVQTEGVGD (245 aa)). The dehydratase (DH) domain stretch occupies residues 1001 to 1491 (GPAADCWTHH…RPNDRLKIQL (491 aa)). Residues 1399–1512 (PGWNEGSTVL…MKVQAFNDET (114 aa)) form the MaoC-like domain. Residues 1530-1893 (YVFCGQGSQE…IEHVQSVTGS (364 aa)) form a malonyl/palmitoyl transferase (MT/PT) domain region.

It belongs to the fungal fatty acid synthetase subunit beta family. [Alpha(6)beta(6)] hexamers of two multifunctional subunits (alpha and beta).

The enzyme catalyses acetyl-CoA + n malonyl-CoA + 2n NADPH + 4n H(+) = a long-chain-acyl-CoA + n CoA + n CO2 + 2n NADP(+).. It carries out the reaction holo-[ACP] + acetyl-CoA = acetyl-[ACP] + CoA. It catalyses the reaction holo-[ACP] + malonyl-CoA = malonyl-[ACP] + CoA. The catalysed reaction is a (3R)-hydroxyacyl-[ACP] = a (2E)-enoyl-[ACP] + H2O. The enzyme catalyses a 2,3-saturated acyl-[ACP] + NAD(+) = a (2E)-enoyl-[ACP] + NADH + H(+). It carries out the reaction (9Z)-octadecenoyl-[ACP] + H2O = (9Z)-octadecenoate + holo-[ACP] + H(+). It functions in the pathway mycotoxin biosynthesis. Fatty acid synthase beta subunit; part of the fragmented gene cluster that mediates the biosynthesis of dothistromin (DOTH), a polyketide toxin very similar in structure to the aflatoxin precursor, versicolorin B. The first step of the pathway is the conversion of acetate to norsolorinic acid (NOR) and requires the fatty acid synthase subunits hexA and hexB, as well as the polyketide synthase pksA. PksA combines a hexanoyl starter unit and 7 malonyl-CoA extender units to synthesize the precursor NOR. The hexanoyl starter unit is provided to the acyl-carrier protein (ACP) domain by the fungal fatty acid synthase hexA/hexB. The second step is the conversion of NOR to averantin (AVN) and requires the norsolorinic acid ketoreductase nor1, which catalyzes the dehydration of norsolorinic acid to form (1'S)-averantin. The cytochrome P450 monooxygenase avnA then catalyzes the hydroxylation of AVN to 5'hydroxyaverantin (HAVN). The next step is performed by adhA that transforms HAVN to averufin (AVF). Averufin might then be converted to hydroxyversicolorone by cypX and avfA. Hydroxyversicolorone is further converted versiconal hemiacetal acetate (VHA) by moxY. VHA is then the substrate for the versiconal hemiacetal acetate esterase est1 to yield versiconal (VAL). Versicolorin B synthase vbsA then converts VAL to versicolorin B (VERB) by closing the bisfuran ring. Then, the activity of the versicolorin B desaturase verB leads to versicolorin A (VERA). DotB, a predicted chloroperoxidase, may perform epoxidation of the A-ring of VERA. Alternatively, a cytochrome P450, such as cypX or avnA could catalyze this step. It is also possible that another, uncharacterized, cytochrome P450 enzyme is responsible for this step. Opening of the epoxide could potentially be achieved by the epoxide hydrolase epoA. However, epoA seems not to be required for DOTH biosynthesis, but other epoxide hydrolases may have the ability to complement this hydrolysis. Alternatively, opening of the epoxide ring could be achieved non-enzymatically. The next step is the deoxygenation of ring A to yield the 5,8-dihydroxyanthraquinone which is most likely catalyzed by the NADPH dehydrogenase encoded by ver1. The last stages of DOTH biosynthesis are proposed to involve hydroxylation of the bisfuran. OrdB and norB might have oxidative roles here. An alternative possibility is that cytochrome P450 monoogenases such as avnA and cypX might perform these steps in addition to previously proposed steps. This is Fatty acid synthase beta subunit hexB from Dothistroma septosporum (strain NZE10 / CBS 128990) (Red band needle blight fungus).